The chain runs to 271 residues: Plasmanylethanolamine desaturase 1 (271 aa).

3 helical membrane-spanning segments follow: residues Trp48–Leu68, Pro75–Val95, and Val162–Phe182. The Histidine box-1 signature appears at His187–His191. Residues His214 to His218 carry the Histidine box-2 motif.

Belongs to the fatty acid desaturase CarF family.

Its subcellular location is the endoplasmic reticulum membrane. The catalysed reaction is a 1-(1,2-saturated alkyl)-2-acyl-sn-glycero-3-phosphoethanolamine + 2 Fe(II)-[cytochrome b5] + O2 + 2 H(+) = a 1-O-(1Z-alkenyl)-2-acyl-sn-glycero-3-phosphoethanolamine + 2 Fe(III)-[cytochrome b5] + 2 H2O. The enzyme catalyses a 1-O-hexadecyl-2-acyl-sn-glycero-3-phosphoethanolamine + 2 Fe(II)-[cytochrome b5] + O2 + 2 H(+) = a 1-O-(1Z-hexadecenyl)-2-acyl-sn-glycero-3-phosphoethanolamine + 2 Fe(III)-[cytochrome b5] + 2 H2O. It catalyses the reaction a 1-O-octadecyl-2-acyl-sn-glycero-3-phosphoethanolamine + 2 Fe(II)-[cytochrome b5] + O2 + 2 H(+) = a 1-O-(1Z-octadecenyl)-2-acyl-sn-glycero-3-phosphoethanolamine + 2 Fe(III)-[cytochrome b5] + 2 H2O. It carries out the reaction a 1-O-(9Z-octadecenyl)-2-acyl-sn-glycero-3-phosphoethanolamine + 2 Fe(II)-[cytochrome b5] + O2 + 2 H(+) = a 1-O-(1Z,9Z-octadecadienyl)-2-acyl-sn-glycero-3-phosphoethanolamine + 2 Fe(III)-[cytochrome b5] + 2 H2O. It participates in lipid metabolism; fatty acid metabolism. Its function is as follows. Plasmanylethanolamine desaturase involved in plasmalogen biogenesis in the endoplasmic reticulum membrane. Plasmalogens are glycerophospholipids with a hydrocarbon chain linked by a vinyl ether bond at the glycerol sn-1 position, and are involved in antioxidative and signaling mechanisms. The chain is Plasmanylethanolamine desaturase 1 from Bos taurus (Bovine).